Consider the following 184-residue polypeptide: J-type co-chaperone JAC1, mitochondrial (184 aa).

Residues 1–10 (MLKYLVQRRF) constitute a mitochondrion transit peptide. Residues 13 to 82 (TFYELFPKTF…LRRSQYMLKL (70 aa)) enclose the J domain. The HSP70 binding signature appears at 48-50 (HPD). An interaction with ISU1 region spans residues 71–184 (DPLRRSQYML…APGKQLEMNH (114 aa)).

It belongs to the HscB family. Interacts with ISU1 and SSQ1.

The protein resides in the mitochondrion matrix. In terms of biological role, co-chaperone required for the assembly of iron-sulfur (Fe/S) clusters in mitochondria. Stimulates the ATPase activity of its specialized Hsp70 chaperone partner SSQ1, to mediate the transfer of iron-sulfur clusters from ISU1 to GRX5. Binds to the substrate protein ISU1 and targets it to SSQ1. The chain is J-type co-chaperone JAC1, mitochondrial from Saccharomyces cerevisiae (strain ATCC 204508 / S288c) (Baker's yeast).